The chain runs to 321 residues: NADH-ubiquinone oxidoreductase chain 1 (321 aa).

The next 8 membrane-spanning stretches (helical) occupy residues Ile7–Met27, Ile73–Ile93, Leu104–Gly124, Val148–Leu168, His175–Ala195, Phe227–Ile247, Glu256–Ile276, and Leu297–Ile317.

Belongs to the complex I subunit 1 family.

Its subcellular location is the mitochondrion inner membrane. The enzyme catalyses a ubiquinone + NADH + 5 H(+)(in) = a ubiquinol + NAD(+) + 4 H(+)(out). Core subunit of the mitochondrial membrane respiratory chain NADH dehydrogenase (Complex I) that is believed to belong to the minimal assembly required for catalysis. Complex I functions in the transfer of electrons from NADH to the respiratory chain. The immediate electron acceptor for the enzyme is believed to be ubiquinone. The protein is NADH-ubiquinone oxidoreductase chain 1 (MT-ND1) of Varanus dumerilii (Dumeril's monitor).